The primary structure comprises 37 residues: Large ribosomal subunit protein bL36 (37 aa).

Belongs to the bacterial ribosomal protein bL36 family.

This Clostridium kluyveri (strain NBRC 12016) protein is Large ribosomal subunit protein bL36.